Reading from the N-terminus, the 410-residue chain is Replication factor C large subunit (410 aa).

46–53 contributes to the ATP binding site; the sequence is GDPGTGKT.

It belongs to the activator 1 small subunits family. RfcL subfamily. As to quaternary structure, heteromultimer composed of small subunits (RfcS) and large subunits (RfcL).

Its function is as follows. Part of the RFC clamp loader complex which loads the PCNA sliding clamp onto DNA. In Picrophilus torridus (strain ATCC 700027 / DSM 9790 / JCM 10055 / NBRC 100828 / KAW 2/3), this protein is Replication factor C large subunit.